Consider the following 207-residue polypeptide: Thymidine kinase (207 aa).

ATP contacts are provided by residues 15 to 22 (GSMFSGKS) and 88 to 91 (DEVQ). The Proton acceptor role is filled by E89. Residues C145, C148, C183, and H186 each contribute to the Zn(2+) site.

The protein belongs to the thymidine kinase family. In terms of assembly, homotetramer.

It localises to the cytoplasm. The catalysed reaction is thymidine + ATP = dTMP + ADP + H(+). This chain is Thymidine kinase, found in Oceanobacillus iheyensis (strain DSM 14371 / CIP 107618 / JCM 11309 / KCTC 3954 / HTE831).